The chain runs to 280 residues: Secreted RxLR effector protein 39 (280 aa).

Positions 1–19 are cleaved as a signal peptide; the sequence is MRGAYYVAIALLIVASCSA. The RxLR-dEER signature appears at 49–70; the sequence is RVLRGSRDLKNKWAVHAGGEDR. Residues 229-249 are disordered; sequence EVKARSSKRQRTNPMLNNMDG.

Belongs to the RxLR effector family.

The protein resides in the secreted. It localises to the host nucleus. Its function is as follows. Secreted effector that completely suppresses the host cell death induced by cell death-inducing proteins. The polypeptide is Secreted RxLR effector protein 39 (Plasmopara viticola (Downy mildew of grapevine)).